Reading from the N-terminus, the 393-residue chain is NAD(P)H-quinone oxidoreductase subunit H, chloroplastic (393 aa).

This sequence belongs to the complex I 49 kDa subunit family. As to quaternary structure, NDH is composed of at least 16 different subunits, 5 of which are encoded in the nucleus. Interacts with the chaperonin CNP60B4 subunit.

It is found in the plastid. The protein resides in the chloroplast thylakoid membrane. It carries out the reaction a plastoquinone + NADH + (n+1) H(+)(in) = a plastoquinol + NAD(+) + n H(+)(out). It catalyses the reaction a plastoquinone + NADPH + (n+1) H(+)(in) = a plastoquinol + NADP(+) + n H(+)(out). Functionally, NDH shuttles electrons from NAD(P)H:plastoquinone, via FMN and iron-sulfur (Fe-S) centers, to quinones in the photosynthetic chain and possibly in a chloroplast respiratory chain. The immediate electron acceptor for the enzyme in this species is believed to be plastoquinone. Couples the redox reaction to proton translocation, and thus conserves the redox energy in a proton gradient. The chain is NAD(P)H-quinone oxidoreductase subunit H, chloroplastic from Arabidopsis thaliana (Mouse-ear cress).